The sequence spans 275 residues: Translation initiation factor 2 subunit alpha (275 aa).

One can recognise an S1 motif domain in the interval 12-83; that stretch reads GEFVVATVKR…RKGHIDLSLR (72 aa).

The protein belongs to the eIF-2-alpha family. As to quaternary structure, heterotrimer composed of an alpha, a beta and a gamma chain.

EIF-2 functions in the early steps of protein synthesis by forming a ternary complex with GTP and initiator tRNA. The protein is Translation initiation factor 2 subunit alpha (eif2a) of Pyrococcus horikoshii (strain ATCC 700860 / DSM 12428 / JCM 9974 / NBRC 100139 / OT-3).